Consider the following 291-residue polypeptide: ATP synthase gamma chain (291 aa).

It belongs to the ATPase gamma chain family. In terms of assembly, F-type ATPases have 2 components, CF(1) - the catalytic core - and CF(0) - the membrane proton channel. CF(1) has five subunits: alpha(3), beta(3), gamma(1), delta(1), epsilon(1). CF(0) has three main subunits: a, b and c.

It localises to the cell inner membrane. Functionally, produces ATP from ADP in the presence of a proton gradient across the membrane. The gamma chain is believed to be important in regulating ATPase activity and the flow of protons through the CF(0) complex. The polypeptide is ATP synthase gamma chain (Verminephrobacter eiseniae (strain EF01-2)).